The sequence spans 223 residues: Deoxyribose-phosphate aldolase (223 aa).

The Proton donor/acceptor role is filled by aspartate 91. Residue lysine 154 is the Schiff-base intermediate with acetaldehyde of the active site. The Proton donor/acceptor role is filled by lysine 183.

It belongs to the DeoC/FbaB aldolase family. DeoC type 1 subfamily.

Its subcellular location is the cytoplasm. It catalyses the reaction 2-deoxy-D-ribose 5-phosphate = D-glyceraldehyde 3-phosphate + acetaldehyde. Its pathway is carbohydrate degradation; 2-deoxy-D-ribose 1-phosphate degradation; D-glyceraldehyde 3-phosphate and acetaldehyde from 2-deoxy-alpha-D-ribose 1-phosphate: step 2/2. In terms of biological role, catalyzes a reversible aldol reaction between acetaldehyde and D-glyceraldehyde 3-phosphate to generate 2-deoxy-D-ribose 5-phosphate. The chain is Deoxyribose-phosphate aldolase from Geobacillus thermodenitrificans (strain NG80-2).